A 571-amino-acid polypeptide reads, in one-letter code: Cerebral cavernous malformations 2 protein-like (571 aa).

Disordered stretches follow at residues 164-193, 212-295, and 544-571; these read AGVD…GTAE, AEAR…PQDP, and LAPD…DNYL. Residues 184–193 are compositionally biased toward basic and acidic residues; that stretch reads PEKRRVGTAE. Over residues 212 to 223 the composition is skewed to gly residues; it reads AEARAGGGGGGS. Residues 237–251 show a composition bias toward basic and acidic residues; that stretch reads WERRQTFSGSWERRH. Residues 253–264 show a composition bias toward gly residues; sequence GGGGGGGAGKPG. The span at 286–295 shows a compositional bias: pro residues; it reads GPNPLDPQDP. Residues 545–555 are compositionally biased toward acidic residues; that stretch reads APDDDDDDEDE.

It belongs to the CCM2 family.

The sequence is that of Cerebral cavernous malformations 2 protein-like (CCM2L) from Homo sapiens (Human).